The following is a 147-amino-acid chain: Hemoglobin subunit beta (147 aa).

The Globin domain occupies 2-147 (HWEDAEKQYI…ISHSLGREYH (146 aa)). Heme b contacts are provided by His-63 and His-92.

It belongs to the globin family. As to quaternary structure, heterotetramer of two alpha chains and two beta chains. As to expression, red blood cells.

In terms of biological role, involved in oxygen transport from the lung to the various peripheral tissues. The polypeptide is Hemoglobin subunit beta (HBB) (Lepidosiren paradoxus (South American lungfish)).